Consider the following 225-residue polypeptide: Ribonuclease 3 (225 aa).

One can recognise an RNase III domain in the interval 7-129 (LPRLGRILGY…IIGAIYLDAD (123 aa)). Glutamate 42 provides a ligand contact to Mg(2+). Aspartate 46 is a catalytic residue. Aspartate 115 and glutamate 118 together coordinate Mg(2+). Glutamate 118 is a catalytic residue. Residues 155-225 (DPKTLLQEHL…AAEVLERIKK (71 aa)) enclose the DRBM domain.

The protein belongs to the ribonuclease III family. As to quaternary structure, homodimer. Requires Mg(2+) as cofactor.

The protein resides in the cytoplasm. It catalyses the reaction Endonucleolytic cleavage to 5'-phosphomonoester.. In terms of biological role, digests double-stranded RNA. Involved in the processing of primary rRNA transcript to yield the immediate precursors to the large and small rRNAs (23S and 16S). Processes some mRNAs, and tRNAs when they are encoded in the rRNA operon. Processes pre-crRNA and tracrRNA of type II CRISPR loci if present in the organism. This Shewanella loihica (strain ATCC BAA-1088 / PV-4) protein is Ribonuclease 3.